We begin with the raw amino-acid sequence, 102 residues long: Integration host factor subunit alpha (102 aa).

It belongs to the bacterial histone-like protein family. Heterodimer of an alpha and a beta chain.

In terms of biological role, this protein is one of the two subunits of integration host factor, a specific DNA-binding protein that functions in genetic recombination as well as in transcriptional and translational control. The sequence is that of Integration host factor subunit alpha from Paracoccus denitrificans (strain Pd 1222).